A 388-amino-acid chain; its full sequence is 5-hydroxytryptamine receptor 1B (388 aa).

A disordered region spans residues 1–29 (MEQPSRLCSPPASGSLTSSQTNHSTFPNP). At 1–45 (MEQPSRLCSPPASGSLTSSQTNHSTFPNPNCSAPDLEPYQDSIAL) the chain is on the extracellular side. Polar residues predominate over residues 12-29 (ASGSLTSSQTNHSTFPNP). N-linked (GlcNAc...) asparagine glycosylation is found at N22 and N30. The chain crosses the membrane as a helical span at residues 46–71 (PWKVLLATFLGLITLGTTLSNAFVIA). The Cytoplasmic segment spans residues 72 to 85 (TVSRTRKLHTPANY). A helical transmembrane segment spans residues 86 to 110 (LIASLAVTDLLVSILVMPISTMYTV). The Extracellular segment spans residues 111–118 (TGRWTLGQ). Residues 119–144 (VVCDFWLSSDITCCTASILHLCVIAL) traverse the membrane as a helical segment. C121 and C197 form a disulfide bridge. Ergotamine-binding residues include D128 and T133. The short motif at 145-147 (DRY) is the DRY motif; important for ligand-induced conformation changes and signaling element. Residues 145–164 (DRYWAITDAVEYSAKRTPKR) lie on the Cytoplasmic side of the membrane. A helical transmembrane segment spans residues 165 to 183 (AAGMIIMVWVFSVSISMPP). Residues 184 to 203 (LFWRQAKAEEVADCSVNTDH) lie on the Extracellular side of the membrane. V199 lines the ergotamine pocket. Residues 204–227 (ILYTVYSTVGAFYFPTLLLIALYG) traverse the membrane as a helical segment. The Cytoplasmic portion of the chain corresponds to 228-313 (RIYVEARSRI…AARERKATRT (86 aa)). A disordered region spans residues 249–282 (LTRAQLITDSPGSSSSGTSINSRAPEGPSESGSP). Positions 255 to 270 (ITDSPGSSSSGTSINS) are enriched in low complexity. A helical transmembrane segment spans residues 314-335 (LGIILGAFIVCWLPFFIISLAL). Over 336 to 345 (PICDDACWFH) the chain is Extracellular. The chain crosses the membrane as a helical span at residues 346–368 (LAIFDFFNWLGYLNSLINPIIYT). An NPxxY motif; important for ligand-induced conformation changes and signaling motif is present at residues 363-367 (NPIIY). Topologically, residues 369-388 (KSNDDFKQAFQKLMRFRRTS) are cytoplasmic.

The protein belongs to the G-protein coupled receptor 1 family. Homodimer. Heterodimer with HTR1D. Phosphorylated. Desensitization of the receptor may be mediated by its phosphorylation. Post-translationally, palmitoylated.

The protein resides in the cell membrane. Functionally, G-protein coupled receptor for 5-hydroxytryptamine (serotonin). Also functions as a receptor for ergot alkaloid derivatives, various anxiolytic and antidepressant drugs and other psychoactive substances, such as lysergic acid diethylamide (LSD). Ligand binding causes a conformation change that triggers signaling via guanine nucleotide-binding proteins (G proteins) and modulates the activity of downstream effectors, such as adenylate cyclase. HTR1B is coupled to G(i)/G(o) G alpha proteins and mediates inhibitory neurotransmission by inhibiting adenylate cyclase activity. Arrestin family members inhibit signaling via G proteins and mediate activation of alternative signaling pathways. Regulates the release of 5-hydroxytryptamine, dopamine and acetylcholine in the brain, and thereby affects neural activity, nociceptive processing, pain perception, mood and behavior. Besides, plays a role in vasoconstriction of cerebral arteries. The chain is 5-hydroxytryptamine receptor 1B (HTR1B) from Didelphis virginiana (North American opossum).